Reading from the N-terminus, the 222-residue chain is Cytochrome b6-f complex iron-sulfur subunit, chloroplastic (222 aa).

Residues 1 to 49 (MASTALSTASNPTQLCRTRASSLCKPVKGLGFGRERIPRNITCMAGSIS) constitute a chloroplast transit peptide. The chain crosses the membrane as a helical span at residues 66-86 (LLGAISLPTFGMLVPYGSFLV). Residues 109–205 (VEDWLKTHGP…ADVDDGKVVF (97 aa)) form the Rieske domain. [2Fe-2S] cluster-binding residues include Cys-151, His-153, Cys-169, and His-172. A disulfide bridge links Cys-156 with Cys-171.

The protein belongs to the Rieske iron-sulfur protein family. The 4 large subunits of the cytochrome b6-f complex are cytochrome b6, subunit IV (17 kDa polypeptide, petD), cytochrome f and the Rieske protein, while the 4 small subunits are petG, petL, petM and petN. The complex functions as a dimer. [2Fe-2S] cluster is required as a cofactor.

It localises to the plastid. It is found in the chloroplast thylakoid membrane. The catalysed reaction is 2 oxidized [plastocyanin] + a plastoquinol + 2 H(+)(in) = 2 reduced [plastocyanin] + a plastoquinone + 4 H(+)(out). Functionally, component of the cytochrome b6-f complex, which mediates electron transfer between photosystem II (PSII) and photosystem I (PSI), cyclic electron flow around PSI, and state transitions. In Triticum aestivum (Wheat), this protein is Cytochrome b6-f complex iron-sulfur subunit, chloroplastic (petC).